Here is a 194-residue protein sequence, read N- to C-terminus: Peroxynitrite isomerase 1 (194 aa).

The short motif at 40 to 46 is the GXWXGXG element; it reads GVWRGEG. Lys-157 and His-184 together coordinate heme b.

This sequence belongs to the nitrobindin family. Homodimer. Heme b serves as cofactor.

It catalyses the reaction peroxynitrite = nitrate. Its pathway is nitrogen metabolism. Functionally, heme-binding protein able to scavenge peroxynitrite and to protect free L-tyrosine against peroxynitrite-mediated nitration, by acting as a peroxynitrite isomerase that converts peroxynitrite to nitrate. Therefore, this protein likely plays a role in peroxynitrite sensing and in the detoxification of reactive nitrogen and oxygen species (RNS and ROS, respectively). Is able to bind nitric oxide (NO) in vitro, but may act as a sensor of peroxynitrite levels in vivo. In Mycobacterium ulcerans (strain Agy99), this protein is Peroxynitrite isomerase 1.